The following is a 251-amino-acid chain: DNA polymerase sliding clamp 2 (251 aa).

It belongs to the PCNA family. Heterotrimer. The subunits circularize to form a toroid; DNA passes through its center. Replication factor C (RFC) is required to load the toroid on the DNA.

Sliding clamp subunit that acts as a moving platform for DNA processing. Responsible for tethering the catalytic subunit of DNA polymerase and other proteins to DNA during high-speed replication. This is DNA polymerase sliding clamp 2 from Aeropyrum pernix (strain ATCC 700893 / DSM 11879 / JCM 9820 / NBRC 100138 / K1).